Here is a 235-residue protein sequence, read N- to C-terminus: Flavonoid 3',5'-methyltransferase (235 aa).

S-adenosyl-L-methionine-binding positions include valine 51, glutamate 73, 75-76, serine 81, aspartate 99, and alanine 128; that span reads GV. Aspartate 151 contributes to the a divalent metal cation binding site. S-adenosyl-L-methionine is bound at residue aspartate 153. Residues aspartate 177 and asparagine 178 each coordinate a divalent metal cation.

This sequence belongs to the class I-like SAM-binding methyltransferase superfamily. Cation-dependent O-methyltransferase family. CCoAMT subfamily. A divalent metal cation serves as cofactor.

It localises to the cytoplasm. The catalysed reaction is S-adenosyl-L-methionine + a 3'-hydroxyflavonoid = S-adenosyl-L-homocysteine + a 3'-methoxyflavonoid.. It carries out the reaction S-adenosyl-L-methionine + a 5'-hydroxy-3'-methoxyflavonoid = S-adenosyl-L-homocysteine + a 3',5'-dimethoxyflavonoid.. It participates in pigment biosynthesis; anthocyanin biosynthesis. Its function is as follows. Mediates O-methylation of anthocyanins. Anthocyanins are major pigments in grapes: at ripening initiation in red grapevine berries, the exocarp turns color from green to red and then to purple due to the accumulation and extent of methylation of anthocyanins. Catalyzes both 3' and 5' O-methylation of anthocyanins, with a preference for glycosylated substrates. Active on both anthocyanins and flavonols in vitro. Most active with delphinidin 3-glucoside but also acts on cyanidin 3-glucoside, cyanidin, myricetin, quercetin and quercetin 3-glucoside. Not able to methylate flavan type skeletons with chiral centers, such as catechins or dihydroquercetin. In Vitis vinifera (Grape), this protein is Flavonoid 3',5'-methyltransferase (FAOMT).